Reading from the N-terminus, the 329-residue chain is Ribosomal RNA small subunit methyltransferase H (329 aa).

Residues 39–41, Asp56, Phe85, Asp106, and Gln113 each bind S-adenosyl-L-methionine; that span reads GGY. The interval 289–308 is disordered; the sequence is SGAIRPTPEEEARNPRARSA.

Belongs to the methyltransferase superfamily. RsmH family.

Its subcellular location is the cytoplasm. It catalyses the reaction cytidine(1402) in 16S rRNA + S-adenosyl-L-methionine = N(4)-methylcytidine(1402) in 16S rRNA + S-adenosyl-L-homocysteine + H(+). Specifically methylates the N4 position of cytidine in position 1402 (C1402) of 16S rRNA. In Novosphingobium aromaticivorans (strain ATCC 700278 / DSM 12444 / CCUG 56034 / CIP 105152 / NBRC 16084 / F199), this protein is Ribosomal RNA small subunit methyltransferase H.